Consider the following 323-residue polypeptide: Acetyl-coenzyme A carboxylase carboxyl transferase subunit alpha (323 aa).

The region spanning 39 to 293 is the CoA carboxyltransferase C-terminal domain; sequence RLAGKSQQLT…KRSLAESLRQ (255 aa).

Belongs to the AccA family. As to quaternary structure, acetyl-CoA carboxylase is a heterohexamer composed of biotin carboxyl carrier protein (AccB), biotin carboxylase (AccC) and two subunits each of ACCase subunit alpha (AccA) and ACCase subunit beta (AccD).

It is found in the cytoplasm. The catalysed reaction is N(6)-carboxybiotinyl-L-lysyl-[protein] + acetyl-CoA = N(6)-biotinyl-L-lysyl-[protein] + malonyl-CoA. It participates in lipid metabolism; malonyl-CoA biosynthesis; malonyl-CoA from acetyl-CoA: step 1/1. In terms of biological role, component of the acetyl coenzyme A carboxylase (ACC) complex. First, biotin carboxylase catalyzes the carboxylation of biotin on its carrier protein (BCCP) and then the CO(2) group is transferred by the carboxyltransferase to acetyl-CoA to form malonyl-CoA. This is Acetyl-coenzyme A carboxylase carboxyl transferase subunit alpha from Cupriavidus necator (strain ATCC 17699 / DSM 428 / KCTC 22496 / NCIMB 10442 / H16 / Stanier 337) (Ralstonia eutropha).